Reading from the N-terminus, the 126-residue chain is Nascent polypeptide-associated complex protein (126 aa).

The 68-residue stretch at P10 to K77 folds into the NAC-A/B domain.

It belongs to the NAC-alpha family. Homodimer. Interacts with the ribosome. Binds ribosomal RNA.

Its function is as follows. Contacts the emerging nascent chain on the ribosome. This is Nascent polypeptide-associated complex protein from Methanococcus maripaludis (strain DSM 14266 / JCM 13030 / NBRC 101832 / S2 / LL).